Reading from the N-terminus, the 215-residue chain is Glutathione S-transferase D2 (215 aa).

A GST N-terminal domain is found at 1–80; the sequence is MDFYYMPGGG…YLVEKYGKDD (80 aa). Residues 50 to 52 and 64 to 66 contribute to the glutathione site; these read HTI and ESR. Positions 86-212 constitute a GST C-terminal domain; sequence DPKKRAVINQ…MKALFDARKL (127 aa).

It belongs to the GST superfamily. Delta family. Homodimer.

It carries out the reaction RX + glutathione = an S-substituted glutathione + a halide anion + H(+). Conjugation of reduced glutathione to a wide number of exogenous and endogenous hydrophobic electrophiles. May be involved in detoxification. The chain is Glutathione S-transferase D2 from Drosophila melanogaster (Fruit fly).